Here is a 558-residue protein sequence, read N- to C-terminus: Protein NRT1/ PTR FAMILY 2.3 (558 aa).

12 helical membrane passes run 33–53, 69–89, 92–112, 128–148, 176–196, 203–223, 329–349, 371–391, 403–423, 439–459, 478–498, and 517–537; these read TLLG…VFLI, VANG…DSFF, IPVI…LTLI, VLCT…LALV, FFNW…TAIV, SWKL…IVFV, LWLS…LIVL, VIII…VFPM, LQKV…SAVV, VLWL…QFPA, SLTS…IDLI, and VYWL…VCSW.

The protein belongs to the major facilitator superfamily. Proton-dependent oligopeptide transporter (POT/PTR) (TC 2.A.17) family. Expressed in flowers, siliques and root epidermis or cortex. Detected in shoots.

It localises to the membrane. In terms of biological role, transporter involved in a passive nitrate efflux. In Arabidopsis thaliana (Mouse-ear cress), this protein is Protein NRT1/ PTR FAMILY 2.3 (NPF2.3).